Consider the following 316-residue polypeptide: Protoheme IX farnesyltransferase (316 aa).

9 helical membrane passes run 32-52, 53-73, 93-113, 116-136, 152-172, 180-200, 221-241, 252-271, and 289-309; these read VMSL…GHIN, PVLG…SGAL, IPAG…LSGF, VILG…TIFF, NIVI…ACVT, TVLF…LALF, VTKH…VLPS, LVAA…VWRM, and IFYL…AILV.

Belongs to the UbiA prenyltransferase family. Protoheme IX farnesyltransferase subfamily.

The protein resides in the cell inner membrane. It carries out the reaction heme b + (2E,6E)-farnesyl diphosphate + H2O = Fe(II)-heme o + diphosphate. It functions in the pathway porphyrin-containing compound metabolism; heme O biosynthesis; heme O from protoheme: step 1/1. Its function is as follows. Converts heme B (protoheme IX) to heme O by substitution of the vinyl group on carbon 2 of heme B porphyrin ring with a hydroxyethyl farnesyl side group. This is Protoheme IX farnesyltransferase from Rhizobium etli (strain ATCC 51251 / DSM 11541 / JCM 21823 / NBRC 15573 / CFN 42).